Here is a 332-residue protein sequence, read N- to C-terminus: Probable endo-beta-1,4-glucanase B (332 aa).

The first 18 residues, 1-18, serve as a signal peptide directing secretion; the sequence is MKFQSTLLLAAAAGSALA. N-linked (GlcNAc...) asparagine glycans are attached at residues Asn-38 and Asn-100. Glu-160 functions as the Proton donor in the catalytic mechanism. A glycan (N-linked (GlcNAc...) asparagine) is linked at Asn-212. Glu-267 (nucleophile) is an active-site residue. Residue Asn-289 is glycosylated (N-linked (GlcNAc...) asparagine).

This sequence belongs to the glycosyl hydrolase 5 (cellulase A) family.

The protein resides in the secreted. The catalysed reaction is Endohydrolysis of (1-&gt;4)-beta-D-glucosidic linkages in cellulose, lichenin and cereal beta-D-glucans.. Its function is as follows. Has endoglucanase activity on substrates containing beta-1,4 glycosidic bonds, like in carboxymethylcellulose (CMC), hydroxyethylcellulose (HEC) and beta-glucan. Involved in the degradation of complex natural cellulosic substrates. This chain is Probable endo-beta-1,4-glucanase B (eglB), found in Aspergillus kawachii (strain NBRC 4308) (White koji mold).